The following is a 176-amino-acid chain: RNA pyrophosphohydrolase (176 aa).

Residues glycine 6–lysine 149 form the Nudix hydrolase domain. The Nudix box signature appears at glycine 38–glycine 59.

This sequence belongs to the Nudix hydrolase family. RppH subfamily. Requires a divalent metal cation as cofactor.

Accelerates the degradation of transcripts by removing pyrophosphate from the 5'-end of triphosphorylated RNA, leading to a more labile monophosphorylated state that can stimulate subsequent ribonuclease cleavage. The protein is RNA pyrophosphohydrolase of Shigella boydii serotype 18 (strain CDC 3083-94 / BS512).